The following is a 152-amino-acid chain: Erythema protein SVEP (152 aa).

Residues 1–18 (MSITQSFFVLTLAIFGAA) form the signal peptide.

Salivary gland (at protein level).

The protein localises to the secreted. Salivary vasoactive peptide; induces vasodilatation in bioassay with rabbit aortic rings. This chain is Erythema protein SVEP, found in Simulium vittatum (Striped black fly).